Reading from the N-terminus, the 264-residue chain is 3-methyl-2-oxobutanoate hydroxymethyltransferase (264 aa).

Mg(2+) is bound by residues Asp-45 and Asp-84. 3-methyl-2-oxobutanoate is bound by residues 45 to 46 (DS), Asp-84, and Lys-113. Glu-115 serves as a coordination point for Mg(2+). Residue Glu-182 is the Proton acceptor of the active site.

The protein belongs to the PanB family. As to quaternary structure, homodecamer; pentamer of dimers. It depends on Mg(2+) as a cofactor.

The protein localises to the cytoplasm. It carries out the reaction 3-methyl-2-oxobutanoate + (6R)-5,10-methylene-5,6,7,8-tetrahydrofolate + H2O = 2-dehydropantoate + (6S)-5,6,7,8-tetrahydrofolate. Its pathway is cofactor biosynthesis; (R)-pantothenate biosynthesis; (R)-pantoate from 3-methyl-2-oxobutanoate: step 1/2. Functionally, catalyzes the reversible reaction in which hydroxymethyl group from 5,10-methylenetetrahydrofolate is transferred onto alpha-ketoisovalerate to form ketopantoate. The protein is 3-methyl-2-oxobutanoate hydroxymethyltransferase of Helicobacter hepaticus (strain ATCC 51449 / 3B1).